Reading from the N-terminus, the 214-residue chain is Late embryogenesis abundant protein At1g64065 (214 aa).

Residues Val-41–Phe-61 form a helical membrane-spanning segment.

It belongs to the LEA type 2 family.

It is found in the membrane. The chain is Late embryogenesis abundant protein At1g64065 from Arabidopsis thaliana (Mouse-ear cress).